A 68-amino-acid chain; its full sequence is Large ribosomal subunit protein bL28 (68 aa).

The segment at 1 to 30 is disordered; that stretch reads MAKICDHCGKKPQSGNNVSHANNKSKRRFE. The segment covering 13–22 has biased composition (polar residues); sequence QSGNNVSHAN.

It belongs to the bacterial ribosomal protein bL28 family.

This is Large ribosomal subunit protein bL28 from Solidesulfovibrio magneticus (strain ATCC 700980 / DSM 13731 / RS-1) (Desulfovibrio magneticus).